Reading from the N-terminus, the 418-residue chain is Glutamate dehydrogenase (418 aa).

K105 is a catalytic residue. 217-223 (GYGNVGY) lines the NAD(+) pocket.

Belongs to the Glu/Leu/Phe/Val dehydrogenases family. In terms of assembly, homohexamer.

It is found in the cytoplasm. The catalysed reaction is L-glutamate + NAD(+) + H2O = 2-oxoglutarate + NH4(+) + NADH + H(+). It carries out the reaction L-glutamate + NADP(+) + H2O = 2-oxoglutarate + NH4(+) + NADPH + H(+). The polypeptide is Glutamate dehydrogenase (gdhA) (Aeropyrum pernix (strain ATCC 700893 / DSM 11879 / JCM 9820 / NBRC 100138 / K1)).